Here is a 339-residue protein sequence, read N- to C-terminus: Beta-ketoacyl-[acyl-carrier-protein] synthase III (339 aa).

Catalysis depends on residues Cys121 and His257. The interval 258–262 (QANLR) is ACP-binding. Asn288 is an active-site residue.

This sequence belongs to the thiolase-like superfamily. FabH family. In terms of assembly, homodimer.

Its subcellular location is the cytoplasm. It catalyses the reaction malonyl-[ACP] + propanoyl-CoA + H(+) = 3-oxopentanoyl-[ACP] + CO2 + CoA. The catalysed reaction is 2-methylpropanoyl-CoA + malonyl-[ACP] + H(+) = 4-methyl-3-oxopentanoyl-[ACP] + CO2 + CoA. It carries out the reaction malonyl-[ACP] + acetyl-CoA + H(+) = 3-oxobutanoyl-[ACP] + CO2 + CoA. The enzyme catalyses butanoyl-CoA + malonyl-[ACP] + H(+) = 3-oxohexanoyl-[ACP] + CO2 + CoA. Its pathway is lipid metabolism; fatty acid biosynthesis. In terms of biological role, catalyzes the condensation reaction of fatty acid synthesis by the addition to an acyl acceptor of two carbons from malonyl-ACP. Catalyzes the first condensation reaction which initiates fatty acid synthesis and may therefore play a role in governing the total rate of fatty acid production. Possesses both acetoacetyl-ACP synthase and acetyl transacylase activities. Propionyl-CoA and isobutyryl-CoA were the two most preferred substrates, although acetyl-CoA and butyryl-CoA could also be accepted and elongated. Involved in the biosynthesis of R1128 polyketide. The polypeptide is Beta-ketoacyl-[acyl-carrier-protein] synthase III (Streptomyces lividans).